Reading from the N-terminus, the 213-residue chain is MGKELTIAMPKGRIFEEAADMLRKAGYQLPEEFDDSRKLIIQVPEENLRFILAKPMDVTTYVEHGVADVGIAGKDVLLEEERDVYEVLDLNISKCRLAVAGLPETAADTVAPRVATKYPNVASSYFREQGEQVEIIKLNGSIELAPLIGLAGRIVDIVSTGQTLRENGLVETEKICDITSRLIVNPVSYRMKDAVIDEMASRLSLIVEGEKAK.

The protein belongs to the ATP phosphoribosyltransferase family. Short subfamily. As to quaternary structure, heteromultimer composed of HisG and HisZ subunits.

It is found in the cytoplasm. The catalysed reaction is 1-(5-phospho-beta-D-ribosyl)-ATP + diphosphate = 5-phospho-alpha-D-ribose 1-diphosphate + ATP. The protein operates within amino-acid biosynthesis; L-histidine biosynthesis; L-histidine from 5-phospho-alpha-D-ribose 1-diphosphate: step 1/9. Catalyzes the condensation of ATP and 5-phosphoribose 1-diphosphate to form N'-(5'-phosphoribosyl)-ATP (PR-ATP). Has a crucial role in the pathway because the rate of histidine biosynthesis seems to be controlled primarily by regulation of HisG enzymatic activity. This is ATP phosphoribosyltransferase from Bacillus licheniformis (strain ATCC 14580 / DSM 13 / JCM 2505 / CCUG 7422 / NBRC 12200 / NCIMB 9375 / NCTC 10341 / NRRL NRS-1264 / Gibson 46).